We begin with the raw amino-acid sequence, 308 residues long: 1,4-dihydroxy-2-naphthoate octaprenyltransferase (308 aa).

Over 1–20 the chain is Cytoplasmic; the sequence is MTEQQISRTQAWLESLRPKT. Residues 21 to 41 form a helical membrane-spanning segment; sequence LPLAFAAIIVGTALAWWQGHF. Residue aspartate 42 is a topological domain, periplasmic. Residues 43–63 form a helical membrane-spanning segment; it reads PLVALLALITAGLLQILSNLA. Residues 64–97 lie on the Cytoplasmic side of the membrane; the sequence is NDYGDAVKGSDKPDRIGPLRGMQKGVITQQEMKR. A helical membrane pass occupies residues 98-118; the sequence is ALIITVVLICLSGLALVAVAC. The Periplasmic portion of the chain corresponds to 119–123; the sequence is HTLAD. Residues 124 to 144 traverse the membrane as a helical segment; the sequence is FVGFLILGGLSIIAAITYTVG. Residues 145-148 lie on the Cytoplasmic side of the membrane; the sequence is NRPY. Residues 149 to 169 traverse the membrane as a helical segment; that stretch reads GYIGLGDISVLVFFGWLSVMG. Residues 170 to 176 are Periplasmic-facing; sequence SWYLQAH. The helical transmembrane segment at 177-197 threads the bilayer; it reads TLIPALILPATACGLLATAVL. Residues 198 to 227 are Cytoplasmic-facing; the sequence is NINNLRDINSDRENGKNTLVVRLGEVNARR. The helical transmembrane segment at 228-247 threads the bilayer; it reads YHACLLMGSLVCLALFNLFS. Topologically, residues 248–250 are periplasmic; it reads LHS. A helical transmembrane segment spans residues 251 to 270; it reads LWGWLFLLAAPLLVKQARYV. Residues 271-286 are Cytoplasmic-facing; it reads MREMDPVAMRPMLERT. The helical transmembrane segment at 287 to 307 threads the bilayer; it reads VKGALLTNLLFVLGIFLSQWA. Residue alanine 308 is a topological domain, periplasmic.

It belongs to the MenA family. Type 1 subfamily.

It localises to the cell inner membrane. The enzyme catalyses an all-trans-polyprenyl diphosphate + 1,4-dihydroxy-2-naphthoate + H(+) = a 2-demethylmenaquinol + CO2 + diphosphate. It participates in quinol/quinone metabolism; menaquinone biosynthesis; menaquinol from 1,4-dihydroxy-2-naphthoate: step 1/2. Its function is as follows. Conversion of 1,4-dihydroxy-2-naphthoate (DHNA) to demethylmenaquinone (DMK). Attaches octaprenylpyrophosphate, a membrane-bound 40-carbon side chain to DHNA. The conversion of DHNA to DMK proceeds in three stages: the removal of the carboxyl group of DHNA as CO(2), the attachment of the isoprenoid side chain, and a quinol-to-quinone oxidation, which is thought to be spontaneous. The sequence is that of 1,4-dihydroxy-2-naphthoate octaprenyltransferase from Escherichia coli (strain K12).